The primary structure comprises 1374 residues: Ribonuclease 3 (1374 aa).

Disordered stretches follow at residues 1–95 (MMQG…PLPP), 130–406 (PPVP…EEEE), and 452–497 (LGSR…SSSS). Residues 59–68 (PSTTFSNSPA) are compositionally biased toward polar residues. Pro residues-rich tracts occupy residues 70–95 (NFLP…PLPP) and 145–160 (MMPP…PPVM). A compositionally biased stretch (low complexity) spans 182–202 (FNSFQNNPSSFLPSANNSSSP). 2 stretches are compositionally biased toward basic and acidic residues: residues 216–289 (PSER…ERER) and 298–313 (RRSP…EYKR). Residues serine 355 and serine 373 each carry the phosphoserine modification. Residues 364–399 (RWEEEKDRWSDNQSSGKDKNYTSIKEKEPEETMPDK) are compositionally biased toward basic and acidic residues. The tract at residues 390–1365 (KEPEETMPDK…RWEREHQERE (976 aa)) is necessary for interaction with DGCR8 and pri-miRNA processing activity. Residues 475 to 491 (EDLESSSESECESDEDS) are compositionally biased toward acidic residues. Residues cysteine 536, cysteine 538, histidine 549, cysteine 561, histidine 609, cysteine 676, and histidine 680 each contribute to the Zn(2+) site. RNase III domains lie at 876 to 1056 (LMHL…LEGS) and 1107 to 1233 (LTEF…IDKD). Glutamate 969 contacts Mg(2+). Zn(2+) is bound at residue histidine 1026. Residues asparagine 1042, glutamate 1045, glutamate 1147, aspartate 1219, and glutamate 1222 each coordinate Mg(2+). In terms of domain architecture, DRBM spans 1260 to 1334 (DPKSQLQQCC…AMDALEKYNF (75 aa)).

This sequence belongs to the ribonuclease III family. As to quaternary structure, component of the microprocessor complex, or pri-miRNA processing protein complex, which is composed of DROSHA and DGCR8. The microprocessor complex is a heterotrimer; each of the two DROSHA RNase III domains binds one DGCR8 (via C-terminal region). Interacts with SP1 and SNIP1. Interacts with SRRT/ARS2. Interacts with CPSF3 and ISY1; this interaction is in an RNA dependent manner. Interacts with PUS10; interaction promotes pri-miRNAs processing. The cofactor is Mg(2+). It depends on Mn(2+) as a cofactor. Degraded by autophagy in response to neuronal activity in motor neurons. Ubiquitous.

It is found in the nucleus. The protein resides in the nucleolus. The protein localises to the cytoplasm. It catalyses the reaction Endonucleolytic cleavage to 5'-phosphomonoester.. In terms of biological role, ribonuclease III double-stranded (ds) RNA-specific endoribonuclease that is involved in the initial step of microRNA (miRNA) biogenesis. Component of the microprocessor complex that is required to process primary miRNA transcripts (pri-miRNAs) to release precursor miRNA (pre-miRNA) in the nucleus. Within the microprocessor complex, DROSHA cleaves the 3' and 5' strands of a stem-loop in pri-miRNAs (processing center 11 bp from the dsRNA-ssRNA junction) to release hairpin-shaped pre-miRNAs that are subsequently cut by the cytoplasmic DICER to generate mature miRNAs. Involved also in pre-rRNA processing. Cleaves double-strand RNA and does not cleave single-strand RNA. Involved in the formation of GW bodies. Plays a role in growth homeostasis in response to autophagy in motor neurons. The chain is Ribonuclease 3 (DROSHA) from Homo sapiens (Human).